Consider the following 506-residue polypeptide: Transcriptional coactivator YAP1 (506 aa).

Residues 1 to 38 (MDPGPPPPAAPPQAQGPPSAPPPPGQAPPSAPGPPAPP) show a composition bias toward pro residues. Residues 1-60 (MDPGPPPPAAPPQAQGPPSAPPPPGQAPPSAPGPPAPPGSQAAPQAPPAGHQIVHVRGDS) form a disordered region. Low complexity predominate over residues 39–50 (GSQAAPQAPPAG). The residue at position 60 (serine 60) is a Phosphoserine. Position 62 is a phosphothreonine (threonine 62). A disordered region spans residues 90–112 (LPDSFFKPPEPKAHSRQASTDAG). A phosphoserine mark is found at serine 104 and serine 108. 2 positions are modified to phosphothreonine: threonine 109 and threonine 118. Phosphoserine is present on residues serine 126, serine 127, serine 130, and serine 137. Positions 132-160 (QLGAVSPGTLTPTGVSSGPAAAPSAQHLR) are disordered. Over residues 147–156 (SSGPAAAPSA) the composition is skewed to low complexity. Serine 163 bears the Phosphoserine mark. 2 consecutive WW domains span residues 170–204 (VPLP…PRKA) and 230–263 (PLPD…PRLD). 9 positions are modified to phosphoserine: serine 273, serine 288, serine 369, serine 373, serine 384, serine 390, serine 399, serine 402, and serine 405. 2 disordered regions span residues 274–307 (QSAP…MRLQ) and 356–416 (TLEQ…RTPD). Over residues 279–289 (KQPPPLAPQSP) the composition is skewed to pro residues. The tract at residues 290–506 (PGVLGGGGSS…LDKESFLTWL (217 aa)) is transactivation domain. The segment covering 371–393 (GMSQELRTMTTSGSDPFLNSGTY) has biased composition (polar residues). A compositionally biased stretch (polar residues) spans 401–411 (DSGLSMSSYSV). Tyrosine 409 carries the phosphotyrosine modification. Threonine 414 carries the post-translational modification Phosphothreonine.

It belongs to the YAP1 family. Binds to the SH3 domain of the YES kinase. Binds to WBP1 and WBP2. Binds, in vitro, through the WW1 domain, to neural isoforms of ENAH that contain the PPSY motif. The phosphorylated form interacts with YWHAB. Interacts (via WW domains) with LATS1 (via PPxY motif 2). Interacts with LATS2. Interacts with TEAD1, TEAD2 and TEAD3. Interacts wih TEAD4. Interacts with TP73. Interacts with RUNX1. Interacts with HCK. Interacts (via WW domains) with PTPN14 (via PPxY motif 2); this interaction leads to the cytoplasmic sequestration of YAP1 and inhibits its transcriptional coactivator activity. Interacts (when phosphorylated at Ser-112) with SMAD2, SMAD3 and WWTR1. Interacts with PRRG2 (via cytoplasmic domain). Interacts (via WW domains) with PRRG4 (via cytoplasmic domain). Interacts (phosphorylated) with CLDN18; the interaction sequesters YAP1 away from the nucleus and thereby restricts transcription of YAP1 target genes. Interacts with SMAD1. Interacts with AMOT; the interaction facilitates translocation of YAP1 to the cytoplasm and tight junctions. Interacts with AMOTL2, the interaction is required for ubiquitination of AMOTL2 and localization of YAP1 to tight junctions. Post-translationally, phosphorylated by LATS1 and LATS2; leading to cytoplasmic translocation and inactivation. Phosphorylated by ABL1; leading to YAP1 stabilization, enhanced interaction with TP73 and recruitment onto proapoptotic genes; in response to DNA damage. Phosphorylation at Ser-402 and Ser-405 by CK1 is triggered by previous phosphorylation at Ser-399 by LATS proteins and leads to YAP1 ubiquitination by SCF(beta-TRCP) E3 ubiquitin ligase and subsequent degradation. Phosphorylated at Thr-118, Ser-137, Ser-369 and Thr-414 by MAPK8/JNK1 and MAPK9/JNK2, which is required for the regulation of apoptosis by YAP1. Phosphorylated in the nucleus by PRP4K; phosphorylation leads to nuclear exclusion. In terms of processing, ubiquitinated by SCF(beta-TRCP) E3 ubiquitin ligase.

Its subcellular location is the cytoplasm. The protein resides in the nucleus. The protein localises to the cell junction. It localises to the tight junction. Functionally, transcriptional regulator with dual roles as a coactivator and corepressor. Critical downstream regulatory target in the Hippo signaling pathway, crucial for organ size control and tumor suppression by restricting proliferation and promoting apoptosis. The Hippo signaling pathway core involves a kinase cascade featuring STK3/MST2 and STK4/MST1, along with its regulatory partner SAV1, which phosphorylates and activates LATS1/2 in complex with their regulatory protein, MOB1. This activation leads to the phosphorylation and inactivation of the YAP1 oncoprotein and WWTR1/TAZ. Phosphorylation of YAP1 by LATS1/2 prevents its nuclear translocation, thereby regulating the expression of its target genes. The transcriptional regulation of gene expression requires TEAD transcription factors and modulates cell growth, anchorage-independent growth, and induction of epithelial-mesenchymal transition (EMT). Plays a key role in tissue tension and 3D tissue shape by regulating the cortical actomyosin network, acting via ARHGAP18, a Rho GTPase activating protein that suppresses F-actin polymerization. It also suppresses ciliogenesis by acting as a transcriptional corepressor of TEAD4 target genes AURKA and PLK1. In conjunction with WWTR1, regulates TGFB1-dependent SMAD2 and SMAD3 nuclear accumulation. Synergizes with WBP2 to enhance PGR activity. This chain is Transcriptional coactivator YAP1 (YAP1), found in Canis lupus familiaris (Dog).